Reading from the N-terminus, the 700-residue chain is Probable pre-mRNA-splicing factor ATP-dependent RNA helicase DEAH4 (700 aa).

Alanine 2 bears the N-acetylalanine mark. In terms of domain architecture, Helicase ATP-binding spans 14-178; sequence VETVEKNSVV…FSGCPVLNVP (165 aa). 27–34 contacts ATP; the sequence is GETGSGKS. A DEAH box motif is present at residues 124–127; sequence DEAH. Positions 200-377 constitute a Helicase C-terminal domain; the sequence is SLKVAIDIHV…GSVLYLKSLD (178 aa). Disordered stretches follow at residues 463-486 and 654-682; these read PARS…NGSG and GPAP…SENV.

Belongs to the DEAD box helicase family. DEAH subfamily. PRP22 sub-subfamily.

The catalysed reaction is ATP + H2O = ADP + phosphate + H(+). Its function is as follows. May be involved in pre-mRNA splicing. This chain is Probable pre-mRNA-splicing factor ATP-dependent RNA helicase DEAH4, found in Arabidopsis thaliana (Mouse-ear cress).